The primary structure comprises 401 residues: Argininosuccinate synthase (401 aa).

ATP contacts are provided by residues 8-16 (AYSGGLDTS) and Ala-35. 2 residues coordinate L-citrulline: Tyr-86 and Ser-91. Gly-116 is an ATP binding site. L-aspartate contacts are provided by Thr-118, Asn-122, and Asp-123. Asn-122 contributes to the L-citrulline binding site. L-citrulline contacts are provided by Arg-126, Ser-175, Ser-184, Glu-260, and Tyr-272.

The protein belongs to the argininosuccinate synthase family. Type 1 subfamily. In terms of assembly, homotetramer.

The protein resides in the cytoplasm. It carries out the reaction L-citrulline + L-aspartate + ATP = 2-(N(omega)-L-arginino)succinate + AMP + diphosphate + H(+). It participates in amino-acid biosynthesis; L-arginine biosynthesis; L-arginine from L-ornithine and carbamoyl phosphate: step 2/3. The protein is Argininosuccinate synthase of Carboxydothermus hydrogenoformans (strain ATCC BAA-161 / DSM 6008 / Z-2901).